Reading from the N-terminus, the 224-residue chain is 7-cyano-7-deazaguanine synthase (224 aa).

Residue 10–20 coordinates ATP; that stretch reads VSGGLDSATVL. Positions 189, 199, 202, and 205 each coordinate Zn(2+).

This sequence belongs to the QueC family. Zn(2+) is required as a cofactor.

It catalyses the reaction 7-carboxy-7-deazaguanine + NH4(+) + ATP = 7-cyano-7-deazaguanine + ADP + phosphate + H2O + H(+). Its pathway is purine metabolism; 7-cyano-7-deazaguanine biosynthesis. Its function is as follows. Catalyzes the ATP-dependent conversion of 7-carboxy-7-deazaguanine (CDG) to 7-cyano-7-deazaguanine (preQ(0)). The sequence is that of 7-cyano-7-deazaguanine synthase from Nitrosococcus oceani (strain ATCC 19707 / BCRC 17464 / JCM 30415 / NCIMB 11848 / C-107).